The following is a 1023-amino-acid chain: Vacuolar membrane protease (1023 aa).

Residues 1 to 80 (MRAAGCGGTG…FFRSVFGYRK (80 aa)) lie on the Cytoplasmic side of the membrane. The span at 17–48 (KLSRSISQHQPKSMPQASVNSEQNPSVPNSPS) shows a compositional bias: polar residues. Positions 17-59 (KLSRSISQHQPKSMPQASVNSEQNPSVPNSPSAHKPARSQSAQ) are disordered. A helical membrane pass occupies residues 81 to 101 (TSLTFLVALVFAATLLLSWAD). Residues 102–425 (SSLDFSVDMP…VVFSVSQVVS (324 aa)) lie on the Vacuolar side of the membrane. Asn-170 and Asn-200 each carry an N-linked (GlcNAc...) asparagine glycan. Zn(2+)-binding residues include His-214 and Asp-226. Glu-259 (proton acceptor) is an active-site residue. Positions 260, 285, and 357 each coordinate Zn(2+). The helical transmembrane segment at 426-446 (ANIALLVVVPVASLLLLFIIF) threads the bilayer. Residues 447–461 (RCNKGWGFNFVNAIK) lie on the Cytoplasmic side of the membrane. The chain crosses the membrane as a helical span at residues 462-482 (YPLSLVASVLVLTFVSQVIIV). Over 483-491 (PSNPFLVNS) the chain is Vacuolar. Asn-490 carries N-linked (GlcNAc...) asparagine glycosylation. Residues 492 to 512 (SIGLLVATLFSLFLLLNYIVL) traverse the membrane as a helical segment. The Cytoplasmic portion of the chain corresponds to 513–529 (NGLNLVFKSFKGHQHDE). Residues 530-550 (KLIVMCESSFLTWILLLWSTV) traverse the membrane as a helical segment. Topologically, residues 551–564 (KLSHNKFGDDHTGE) are vacuolar. The chain crosses the membrane as a helical span at residues 565–585 (LFIPILFSLQAVACFLGFLGW). Residues 586–643 (CFKPSKKVKVSREEHQPLLSSNGSNYGTQDDDDSLAPSSSLSLQSGFSENCEVHETKS) are Cytoplasmic-facing. Residues 604-613 (LSSNGSNYGT) show a composition bias toward polar residues. The interval 604–626 (LSSNGSNYGTQDDDDSLAPSSSL) is disordered. A helical membrane pass occupies residues 644–664 (FSYDWLVQFLVIVPISSLIIF). The Vacuolar portion of the chain corresponds to 665–687 (NSGSLILNGLNKSIQESLSAQNL). A glycan (N-linked (GlcNAc...) asparagine) is linked at Asn-675. A helical transmembrane segment spans residues 688–708 (IYKFIQIFVIVWSIPFLPFIF). Residues 709–712 (KLNR) lie on the Cytoplasmic side of the membrane. The helical transmembrane segment at 713–733 (IIVLALSLVLLYGFFAVNITD) threads the bilayer. The Vacuolar portion of the chain corresponds to 734-1023 (AFNDANPLKL…MVSVTKYIEV (290 aa)). N-linked (GlcNAc...) asparagine glycosylation is found at Asn-815, Asn-858, and Asn-892.

This sequence belongs to the peptidase M28 family. It depends on Zn(2+) as a cofactor.

It localises to the vacuole membrane. Its function is as follows. May be involved in vacuolar sorting and osmoregulation. The protein is Vacuolar membrane protease of Clavispora lusitaniae (strain ATCC 42720) (Yeast).